Reading from the N-terminus, the 547-residue chain is Fumarate reductase (CoM/CoB) subunit A (547 aa).

This sequence belongs to the FAD-dependent oxidoreductase 2 family. As to quaternary structure, subunit A of the heterodimeric fumarate reductase of methanogenic Archaea, composed of subunits A (TfrA) and B (TfrB). Requires an oxidized flavin as cofactor.

It is found in the cytoplasm. It catalyses the reaction coenzyme B + coenzyme M + fumarate = coenzyme M-coenzyme B heterodisulfide + succinate. Catalyzes the reduction of fumarate with reduced coenzyme M (CoM-S-H) and coenzyme B (CoB-S-H). In vitro, is able to reduces fumarate with reduced benzyl viologen, oxidize CoM-S-H and CoB-S-H to CoM-S-S-CoB with methylene blue, and reduce CoM-S-S-CoB with reduced benzyl viologen. The enzyme has specificity for the two thiol compounds as the CoB--CoM heterodisulfide reductase. The enzyme is very sensitive to oxygen. The protein is Fumarate reductase (CoM/CoB) subunit A of Methanothermobacter marburgensis (strain ATCC BAA-927 / DSM 2133 / JCM 14651 / NBRC 100331 / OCM 82 / Marburg) (Methanobacterium thermoautotrophicum).